We begin with the raw amino-acid sequence, 512 residues long: 2,3-bisphosphoglycerate-independent phosphoglycerate mutase (512 aa).

2 residues coordinate Mn(2+): D11 and S61. The Phosphoserine intermediate role is filled by S61. Residues H122, 152-153 (RD), R184, R190, 259-262 (RADR), and K332 each bind substrate. Residues D399, H403, D440, H441, and H459 each contribute to the Mn(2+) site.

The protein belongs to the BPG-independent phosphoglycerate mutase family. As to quaternary structure, monomer. Mn(2+) is required as a cofactor.

The enzyme catalyses (2R)-2-phosphoglycerate = (2R)-3-phosphoglycerate. The protein operates within carbohydrate degradation; glycolysis; pyruvate from D-glyceraldehyde 3-phosphate: step 3/5. Catalyzes the interconversion of 2-phosphoglycerate and 3-phosphoglycerate. This is 2,3-bisphosphoglycerate-independent phosphoglycerate mutase from Francisella philomiragia subsp. philomiragia (strain ATCC 25017 / CCUG 19701 / FSC 153 / O#319-036).